A 161-amino-acid chain; its full sequence is MTRNEKAEIISNLEAEFKTSDAIVVCDYKGLSVKKLEALRNSARELNVKVQVVKNTLANIALNNCGKSGMELKDTNIFVWGEDQLAVTKVVAKFEESNNELFKIKTAHIDGEVASVSKVVALSKMPSRDELIAMLLQVWNAPIQNFTIGLNALREKKEQTA.

Belongs to the universal ribosomal protein uL10 family. Part of the ribosomal stalk of the 50S ribosomal subunit. The N-terminus interacts with L11 and the large rRNA to form the base of the stalk. The C-terminus forms an elongated spine to which L12 dimers bind in a sequential fashion forming a multimeric L10(L12)X complex.

Its function is as follows. Forms part of the ribosomal stalk, playing a central role in the interaction of the ribosome with GTP-bound translation factors. The sequence is that of Large ribosomal subunit protein uL10 from Campylobacter fetus subsp. fetus (strain 82-40).